A 503-amino-acid chain; its full sequence is Probable cytosol aminopeptidase (503 aa).

Positions 270 and 275 each coordinate Mn(2+). K282 is a catalytic residue. Residues D293, D352, and E354 each contribute to the Mn(2+) site. The active site involves R356.

The protein belongs to the peptidase M17 family. It depends on Mn(2+) as a cofactor.

The protein resides in the cytoplasm. It catalyses the reaction Release of an N-terminal amino acid, Xaa-|-Yaa-, in which Xaa is preferably Leu, but may be other amino acids including Pro although not Arg or Lys, and Yaa may be Pro. Amino acid amides and methyl esters are also readily hydrolyzed, but rates on arylamides are exceedingly low.. The enzyme catalyses Release of an N-terminal amino acid, preferentially leucine, but not glutamic or aspartic acids.. Presumably involved in the processing and regular turnover of intracellular proteins. Catalyzes the removal of unsubstituted N-terminal amino acids from various peptides. The sequence is that of Probable cytosol aminopeptidase from Klebsiella pneumoniae subsp. pneumoniae (strain ATCC 700721 / MGH 78578).